The chain runs to 63 residues: 2-hydroxymuconate tautomerase (63 aa).

Proline 2 acts as the Proton acceptor; via imino nitrogen in catalysis.

Belongs to the 4-oxalocrotonate tautomerase family. In terms of assembly, homohexamer.

The catalysed reaction is (2Z,4E)-2-hydroxyhexa-2,4-dienedioate = (3E)-2-oxohex-3-enedioate. It participates in xenobiotic degradation; toluene degradation. Its pathway is xenobiotic degradation; xylene degradation. Its function is as follows. Catalyzes the ketonization of 2-hydroxymuconate stereoselectively to yield 2-oxo-3-hexenedioate. This Pseudomonas putida (Arthrobacter siderocapsulatus) protein is 2-hydroxymuconate tautomerase (xylH).